Here is a 666-residue protein sequence, read N- to C-terminus: Probable potassium transport system protein Kup (666 aa).

The next 12 membrane-spanning stretches (helical) occupy residues 16 to 36, 58 to 78, 100 to 120, 149 to 169, 173 to 193, 221 to 241, 253 to 273, 294 to 314, 343 to 363, 373 to 393, 399 to 419, and 424 to 444; these read GFIIALGIVYGDIGTSPLYTM, ISLIIWTLTLITTIKYVLIAL, PWLIVPAMIGGATLLSDGALT, IITTLVILIVLFGIQRFGTGF, IFGPVMFIWFSFLGVSGFFNM, IFILGSIFLATTGAEALYSDL, WPFVKMCIVLSYCGQAAWILA, VYLVSLATLAAIIASQALISG, LYIPVINWILFAVTSCTVLAF, YGLAITITMLMTTILLKYYLI, PILAHLVMAFFALVEFIFFLA, and FMHGGYAVVILALAIVFVMFI.

This sequence belongs to the HAK/KUP transporter (TC 2.A.72) family.

The protein localises to the cell membrane. It carries out the reaction K(+)(in) + H(+)(in) = K(+)(out) + H(+)(out). Transport of potassium into the cell. Likely operates as a K(+):H(+) symporter. The sequence is that of Probable potassium transport system protein Kup from Streptococcus pyogenes serotype M3 (strain ATCC BAA-595 / MGAS315).